The primary structure comprises 115 residues: Large ribosomal subunit protein bL20 (115 aa).

This sequence belongs to the bacterial ribosomal protein bL20 family.

In terms of biological role, binds directly to 23S ribosomal RNA and is necessary for the in vitro assembly process of the 50S ribosomal subunit. It is not involved in the protein synthesizing functions of that subunit. The chain is Large ribosomal subunit protein bL20 from Prochlorococcus marinus (strain MIT 9215).